The chain runs to 343 residues: Small ribosomal subunit biogenesis GTPase RsgA (343 aa).

A CP-type G domain is found at 116-275 (RGQLKPVAAN…LIDSPGIREF (160 aa)). Residues 163-166 (NKAD) and 217-225 (GQSGVGKSS) contribute to the GTP site. Zn(2+) is bound by residues Cys299, Cys304, His306, and Cys312.

It belongs to the TRAFAC class YlqF/YawG GTPase family. RsgA subfamily. In terms of assembly, monomer. Associates with 30S ribosomal subunit, binds 16S rRNA. Zn(2+) serves as cofactor.

The protein localises to the cytoplasm. Functionally, one of several proteins that assist in the late maturation steps of the functional core of the 30S ribosomal subunit. Helps release RbfA from mature subunits. May play a role in the assembly of ribosomal proteins into the subunit. Circularly permuted GTPase that catalyzes slow GTP hydrolysis, GTPase activity is stimulated by the 30S ribosomal subunit. This is Small ribosomal subunit biogenesis GTPase RsgA from Ectopseudomonas mendocina (strain ymp) (Pseudomonas mendocina).